The following is a 304-amino-acid chain: Acetyl-coenzyme A carboxylase carboxyl transferase subunit beta (304 aa).

The CoA carboxyltransferase N-terminal domain occupies 25 to 294; sequence VWTKCDSCGQ…PSVVESKADT (270 aa). Cys29, Cys32, Cys48, and Cys51 together coordinate Zn(2+). The segment at 29-51 adopts a C4-type zinc-finger fold; that stretch reads CDSCGQVLYRAELERNLEVCPKC.

This sequence belongs to the AccD/PCCB family. As to quaternary structure, acetyl-CoA carboxylase is a heterohexamer composed of biotin carboxyl carrier protein (AccB), biotin carboxylase (AccC) and two subunits each of ACCase subunit alpha (AccA) and ACCase subunit beta (AccD). The cofactor is Zn(2+).

Its subcellular location is the cytoplasm. The enzyme catalyses N(6)-carboxybiotinyl-L-lysyl-[protein] + acetyl-CoA = N(6)-biotinyl-L-lysyl-[protein] + malonyl-CoA. It participates in lipid metabolism; malonyl-CoA biosynthesis; malonyl-CoA from acetyl-CoA: step 1/1. Functionally, component of the acetyl coenzyme A carboxylase (ACC) complex. Biotin carboxylase (BC) catalyzes the carboxylation of biotin on its carrier protein (BCCP) and then the CO(2) group is transferred by the transcarboxylase to acetyl-CoA to form malonyl-CoA. This Yersinia pestis bv. Antiqua (strain Nepal516) protein is Acetyl-coenzyme A carboxylase carboxyl transferase subunit beta.